Here is a 225-residue protein sequence, read N- to C-terminus: PKHD-type hydroxylase HEAR3399 (225 aa).

The 101-residue stretch at 77-177 (RYMPPLFNRY…RVCSFFWLQS (101 aa)) folds into the Fe2OG dioxygenase domain. Positions 95, 97, and 158 each coordinate Fe cation. 2-oxoglutarate is bound at residue arginine 168.

Fe(2+) is required as a cofactor. It depends on L-ascorbate as a cofactor.

The sequence is that of PKHD-type hydroxylase HEAR3399 from Herminiimonas arsenicoxydans.